A 292-amino-acid polypeptide reads, in one-letter code: Cyclin-dependent-like kinase 5 (292 aa).

Positions 4 to 286 constitute a Protein kinase domain; sequence YDKMEKIGEG…ADAALRHAYF (283 aa). ATP is bound by residues 10-18 and lysine 33; that span reads IGEGTYGTV. Aspartate 126 serves as the catalytic Proton acceptor. Residues asparagine 131 and aspartate 144 each contribute to the Mg(2+) site.

The protein belongs to the protein kinase superfamily. CMGC Ser/Thr protein kinase family. CDC2/CDKX subfamily. Heterodimer composed of a catalytic subunit cdk-5 and a regulatory subunit cdka-1. Interaction with cdka-1 is required for cdk-5 activation. It depends on Mg(2+) as a cofactor.

The protein resides in the cytoplasm. It localises to the cell projection. It is found in the dendrite. The enzyme catalyses L-seryl-[protein] + ATP = O-phospho-L-seryl-[protein] + ADP + H(+). It carries out the reaction L-threonyl-[protein] + ATP = O-phospho-L-threonyl-[protein] + ADP + H(+). Functionally, proline-directed serine/threonine-protein kinase which, in several motor neurons, promotes the polarized trafficking of synaptic vesicles and dense-core vesicles (DCV). In the ventral nerve cord, phosphorylates lin-10 and thereby prevents lin-10-mediated anterograde trafficking of the glutamate receptor glr-1. Involved in the inhibition of glr-1 trafficking in hypoxic conditions. In DA motor neurons but not in DB motor neurons, regulates axonal transport of synaptic vesicle precursors by inhibiting dynein-mediated retrograde transport. Regulates the trafficking of dense-core vesicles in DA and DB motor neurons by promoting anterograde trafficking to the axon and preventing dynein-dependent trafficking to the dendrite. May regulate these processes in association with cdka-1/p35. Activity may be regulated by cyy-1. Involved in synapse formation during DD motor neuron remodeling by regulating transport of disassembled synaptic material to the new synaptic sites probably by activating the motor protein unc-104/kinesin-3. Regulates microtubule polarity in the dendrite of DB motor neurons. May also play a role in GABAergic synaptic vesicle localization in the ventral nerve cord. The protein is Cyclin-dependent-like kinase 5 of Caenorhabditis elegans.